We begin with the raw amino-acid sequence, 394 residues long: Phosphopentomutase (394 aa).

Mn(2+) contacts are provided by D13, D286, H291, D327, H328, and H339.

Belongs to the phosphopentomutase family. Mn(2+) is required as a cofactor.

Its subcellular location is the cytoplasm. It carries out the reaction 2-deoxy-alpha-D-ribose 1-phosphate = 2-deoxy-D-ribose 5-phosphate. The enzyme catalyses alpha-D-ribose 1-phosphate = D-ribose 5-phosphate. It participates in carbohydrate degradation; 2-deoxy-D-ribose 1-phosphate degradation; D-glyceraldehyde 3-phosphate and acetaldehyde from 2-deoxy-alpha-D-ribose 1-phosphate: step 1/2. Isomerase that catalyzes the conversion of deoxy-ribose 1-phosphate (dRib-1-P) and ribose 1-phosphate (Rib-1-P) to deoxy-ribose 5-phosphate (dRib-5-P) and ribose 5-phosphate (Rib-5-P), respectively. This Bacillus thuringiensis (strain Al Hakam) protein is Phosphopentomutase.